We begin with the raw amino-acid sequence, 382 residues long: 2-carboxy-1,4-naphthoquinone phytyltransferase, chloroplastic (382 aa).

The N-terminal 66 residues, Met1 to Phe66, are a transit peptide targeting the chloroplast. 8 helical membrane-spanning segments follow: residues Val99 to Leu119, Tyr123 to Val143, Thr168 to Leu188, Ile196 to Leu216, Pro224 to Ser244, Val257 to Phe277, Ile323 to Ser343, and Tyr361 to Ala381.

This sequence belongs to the MenA family. Type 2 subfamily.

The protein resides in the plastid. The protein localises to the chloroplast membrane. It carries out the reaction 2-carboxy-1,4-naphthoquinone + phytyl diphosphate + H(+) = demethylphylloquinone + CO2 + diphosphate. Its function is as follows. Involved in the synthesis of phylloquinone (vitamin K1). Catalyzes the transfer of a prenyl chain to 2-carboxy-1,4-naphthoquinone. In Arabidopsis thaliana (Mouse-ear cress), this protein is 2-carboxy-1,4-naphthoquinone phytyltransferase, chloroplastic (ABC4).